Reading from the N-terminus, the 625-residue chain is DNA mismatch repair protein MutL (625 aa).

The tract at residues 404–427 (PPPRNAPQSTGMPSMAGTGLPATS) is disordered.

The protein belongs to the DNA mismatch repair MutL/HexB family.

This protein is involved in the repair of mismatches in DNA. It is required for dam-dependent methyl-directed DNA mismatch repair. May act as a 'molecular matchmaker', a protein that promotes the formation of a stable complex between two or more DNA-binding proteins in an ATP-dependent manner without itself being part of a final effector complex. The chain is DNA mismatch repair protein MutL from Xanthomonas oryzae pv. oryzae (strain MAFF 311018).